A 62-amino-acid chain; its full sequence is UPF0434 protein Fphi_1862 (62 aa).

This sequence belongs to the UPF0434 family.

The chain is UPF0434 protein Fphi_1862 from Francisella philomiragia subsp. philomiragia (strain ATCC 25017 / CCUG 19701 / FSC 153 / O#319-036).